The sequence spans 1388 residues: Retrotransposon Gag-like protein 9 (1388 aa).

5 disordered regions span residues 491 to 511 (ATAS…GAMS), 769 to 790 (TPLM…ASSS), 895 to 918 (GGVS…RRPS), 1100 to 1138 (TDSG…PKEV), and 1336 to 1388 (AMGN…HTNK). Residues 1103–1123 (GEASTSHINITASGSKPTSHM) show a composition bias toward polar residues. Residues 1359–1374 (YLKEHGDPQEGLHDHL) are compositionally biased toward basic and acidic residues.

This Homo sapiens (Human) protein is Retrotransposon Gag-like protein 9.